The following is an 840-amino-acid chain: Phosphatidylglycerol lysyltransferase (840 aa).

Residues 1-8 (MNQEVKNK) lie on the Cytoplasmic side of the membrane. The chain crosses the membrane as a helical span at residues 9 to 29 (IFSILKITFATALFIFVVITL). The Extracellular portion of the chain corresponds to 30-52 (YRELSGINFKDTLVEFSKINRMS). Residues 53 to 73 (LVLLFIGGGASLVILSMYDVI) traverse the membrane as a helical segment. At 74–89 (LSRALKMDISLGKVLR) the chain is on the cytoplasmic side. A helical transmembrane segment spans residues 90-110 (VSYIINALNAIVGFGGFIGAG). Over 111–128 (VRAMVYKNYTHDKKKLVH) the chain is Extracellular. A helical membrane pass occupies residues 129-149 (FISLILISMLTGLSLLSLLIV). Over 150–161 (FHVFDASLILNK) the chain is Cytoplasmic. The helical transmembrane segment at 162-182 (ITWVRWVLYAVSLFLPLFIIY) threads the bilayer. Residues 183-200 (SMVRPPDKNNRYVGLYCT) lie on the Extracellular side of the membrane. A helical transmembrane segment spans residues 201–221 (LVSCVEWLAAAVVLYFCGVIV). The Cytoplasmic portion of the chain corresponds to 222 to 229 (DVHVSFMS). The helical transmembrane segment at 230 to 250 (FIAIFIIAALSGLVSFIPGGF) threads the bilayer. Residues 251–271 (GAFDLVVLLGFKTLGVPEEKV) lie on the Extracellular side of the membrane. The helical transmembrane segment at 272–292 (LLMLLLYRFAYYFVPVIIALI) threads the bilayer. Over 293–337 (LSSFEFGTSAKKYIEGSKYFIPAKDVTSFLMSYQKDIIAKIPSLS) the chain is Cytoplasmic. The chain crosses the membrane as a helical span at residues 338 to 358 (LAILVFFTSMIFFVNNLTIVY). Topologically, residues 359–369 (DALYDGNHLTY) are extracellular. A helical transmembrane segment spans residues 370–390 (YLLLAIHTSACLLLLLNVVGI). Residues 391–394 (YKQS) lie on the Cytoplasmic side of the membrane. Helical transmembrane passes span 395 to 415 (RRAI…TLFT) and 416 to 436 (YASY…IVAF). At 437–450 (RRARRLKRPIRMRN) the chain is on the cytoplasmic side. Residues 451–471 (LVAMLLFSIFILYINHIFIAG) traverse the membrane as a helical segment. The Extracellular segment spans residues 472–489 (TFYALDVYTIEMHTSVLK). Residues 490–510 (YYFWITILIIAIIVGAIAWLF) traverse the membrane as a helical segment. Residues 511–840 (DYQFSKVRIS…SKVMRVIRHK (330 aa)) are Cytoplasmic-facing.

The protein belongs to the LPG synthase family.

The protein localises to the cell membrane. It carries out the reaction L-lysyl-tRNA(Lys) + a 1,2-diacyl-sn-glycero-3-phospho-(1'-sn-glycerol) = a 1,2-diacyl-sn-glycero-3-phospho-1'-(3'-O-L-lysyl)-sn-glycerol + tRNA(Lys). In terms of biological role, catalyzes the transfer of a lysyl group from L-lysyl-tRNA(Lys) to membrane-bound phosphatidylglycerol (PG), which produces lysylphosphatidylglycerol (LPG), a major component of the bacterial membrane with a positive net charge. LPG synthesis contributes to bacterial virulence as it is involved in the resistance mechanism against cationic antimicrobial peptides (CAMP) produces by the host's immune system (defensins, cathelicidins) and by the competing microorganisms (bacteriocins). In fact, the modification of anionic phosphatidylglycerol with positively charged L-lysine results in repulsion of the peptides. In Staphylococcus aureus (strain MRSA252), this protein is Phosphatidylglycerol lysyltransferase (mprF).